The chain runs to 260 residues: Ribonuclease HII (260 aa).

The region spanning 75–260 (ELIAGVDEVG…FEPIKSIIKK (186 aa)) is the RNase H type-2 domain. 3 residues coordinate a divalent metal cation: aspartate 81, glutamate 82, and aspartate 173.

This sequence belongs to the RNase HII family. The cofactor is Mn(2+). It depends on Mg(2+) as a cofactor.

It localises to the cytoplasm. It carries out the reaction Endonucleolytic cleavage to 5'-phosphomonoester.. Endonuclease that specifically degrades the RNA of RNA-DNA hybrids. The polypeptide is Ribonuclease HII (Streptococcus thermophilus (strain CNRZ 1066)).